The sequence spans 415 residues: Adipocyte plasma membrane-associated protein (415 aa).

The disordered stretch occupies residues 1–30 (MNEAEGLRQRRPLRPQVITEDSPAQEAKEG). The Cytoplasmic segment spans residues 1 to 39 (MNEAEGLRQRRPLRPQVITEDSPAQEAKEGSAYSSKVFR). The helical transmembrane segment at 40 to 60 (VTFLTLAASLAVPLLGATVLL) threads the bilayer. Residues 61-412 (DCPIDPQPIS…RSPFICRLNL (352 aa)) lie on the Extracellular side of the membrane. The N-linked (GlcNAc...) asparagine glycan is linked to asparagine 159.

Belongs to the strictosidine synthase family.

The protein resides in the membrane. This Gallus gallus (Chicken) protein is Adipocyte plasma membrane-associated protein (APMAP).